We begin with the raw amino-acid sequence, 277 residues long: Inositol monophosphatase 1 (277 aa).

Glu-70, Asp-90, Ile-92, and Asp-93 together coordinate Mg(2+). Substrate contacts are provided by residues Glu-70, 90 to 95 (DPIDGT), 194 to 196 (GTA), Glu-213, and Asp-220. Residue Asp-220 participates in Mg(2+) binding.

This sequence belongs to the inositol monophosphatase superfamily. Homodimer. It depends on Mg(2+) as a cofactor. In terms of tissue distribution, mostly expressed in brain, small intestine, testis, kidney, and spleen (at protein level).

The protein localises to the cytoplasm. The enzyme catalyses a myo-inositol phosphate + H2O = myo-inositol + phosphate. It catalyses the reaction 1D-myo-inositol 1-phosphate + H2O = myo-inositol + phosphate. The catalysed reaction is 1D-myo-inositol 2-phosphate + H2O = myo-inositol + phosphate. It carries out the reaction 1D-myo-inositol 3-phosphate + H2O = myo-inositol + phosphate. The enzyme catalyses 1D-myo-inositol 4-phosphate + H2O = myo-inositol + phosphate. It catalyses the reaction 1D-myo-inositol 5-phosphate + H2O = myo-inositol + phosphate. The catalysed reaction is 1D-myo-inositol 6-phosphate + H2O = myo-inositol + phosphate. It carries out the reaction scyllo-inositol 1-phosphate + H2O = scyllo-inositol + phosphate. The enzyme catalyses alpha-D-galactose 1-phosphate + H2O = D-galactose + phosphate. It catalyses the reaction alpha-D-glucose 1-phosphate + H2O = D-glucose + phosphate. The catalysed reaction is D-glucose 6-phosphate + H2O = D-glucose + phosphate. It carries out the reaction beta-D-fructose 1-phosphate + H2O = D-fructose + phosphate. The enzyme catalyses glycerol 2-phosphate + H2O = glycerol + phosphate. It catalyses the reaction adenosine 2'-phosphate + H2O = adenosine + phosphate. It functions in the pathway polyol metabolism; myo-inositol biosynthesis; myo-inositol from D-glucose 6-phosphate: step 2/2. Its activity is regulated as follows. Inhibited by Li(+), Ca(2+) and Mn(2+), but also by Mg(2+) at concentrations above 3 mM. In terms of biological role, phosphatase involved in the dephosphorylation of myo-inositol monophosphate to generate myo-inositol. Is also able to dephosphorylate scyllo-inositol-phosphate, myo-inositol 1,4-diphosphate, scyllo-inositol-1,3-diphosphate and scyllo-inositol-1,4-diphosphate. Also dephosphorylates in vitro other sugar-phosphates including D-galactose-1-phosphate, glucose-1-phosphate, glucose-6-phosphate, fructose-1-phosphate, beta-glycerophosphate and 2'-AMP. Responsible for the provision of inositol required for synthesis of phosphatidylinositol and polyphosphoinositides, and involved in maintaining normal brain function. Has been implicated as the pharmacological target for lithium Li(+) action in brain. The sequence is that of Inositol monophosphatase 1 (Impa1) from Mus musculus (Mouse).